The chain runs to 963 residues: Phosphoenolpyruvate carboxylase (963 aa).

Phosphoserine is present on S11. Catalysis depends on residues H172 and K600.

This sequence belongs to the PEPCase type 1 family. As to quaternary structure, homotetramer. It depends on Mg(2+) as a cofactor.

The protein localises to the cytoplasm. The catalysed reaction is oxaloacetate + phosphate = phosphoenolpyruvate + hydrogencarbonate. By light-reversible phosphorylation. In terms of biological role, through the carboxylation of phosphoenolpyruvate (PEP) it forms oxaloacetate, a four-carbon dicarboxylic acid source for the tricarboxylic acid cycle. This chain is Phosphoenolpyruvate carboxylase (PPC), found in Picea abies (Norway spruce).